Consider the following 90-residue polypeptide: Sec-independent protein translocase protein TatA (90 aa).

Residues 2 to 22 form a helical membrane-spanning segment; it reads GVGGISIWQLLIVLVIILLLF. Basic and acidic residues-rich tracts occupy residues 45–68 and 76–90; these read LRDEERRDAEEAATIEHKQAHKAE and ADADFKIKSGNDEHK. Positions 45–90 are disordered; that stretch reads LRDEERRDAEEAATIEHKQAHKAENPSQRQQADADFKIKSGNDEHK.

It belongs to the TatA/E family. As to quaternary structure, the Tat system comprises two distinct complexes: a TatABC complex, containing multiple copies of TatA, TatB and TatC subunits, and a separate TatA complex, containing only TatA subunits. Substrates initially bind to the TatABC complex, which probably triggers association of the separate TatA complex to form the active translocon.

It localises to the cell inner membrane. Functionally, part of the twin-arginine translocation (Tat) system that transports large folded proteins containing a characteristic twin-arginine motif in their signal peptide across membranes. TatA could form the protein-conducting channel of the Tat system. In Nitrosococcus oceani (strain ATCC 19707 / BCRC 17464 / JCM 30415 / NCIMB 11848 / C-107), this protein is Sec-independent protein translocase protein TatA.